The following is a 142-amino-acid chain: Transcriptional regulator MraZ (142 aa).

SpoVT-AbrB domains lie at 5–51 (ASSL…PRPE) and 77–120 (AMDV…DKAS).

This sequence belongs to the MraZ family. In terms of assembly, forms oligomers.

The protein localises to the cytoplasm. The protein resides in the nucleoid. In Verminephrobacter eiseniae (strain EF01-2), this protein is Transcriptional regulator MraZ.